Here is a 264-residue protein sequence, read N- to C-terminus: S-adenosylmethionine decarboxylase proenzyme (264 aa).

Ser-113 acts as the Schiff-base intermediate with substrate; via pyruvic acid in catalysis. Pyruvic acid (Ser); by autocatalysis is present on Ser-113. His-118 serves as the catalytic Proton acceptor; for processing activity. Cys-141 functions as the Proton donor; for catalytic activity in the catalytic mechanism.

Belongs to the prokaryotic AdoMetDC family. Type 2 subfamily. Heterooctamer of four alpha and four beta chains arranged as a tetramer of alpha/beta heterodimers. Pyruvate serves as cofactor. Is synthesized initially as an inactive proenzyme. Formation of the active enzyme involves a self-maturation process in which the active site pyruvoyl group is generated from an internal serine residue via an autocatalytic post-translational modification. Two non-identical subunits are generated from the proenzyme in this reaction, and the pyruvate is formed at the N-terminus of the alpha chain, which is derived from the carboxyl end of the proenzyme. The post-translation cleavage follows an unusual pathway, termed non-hydrolytic serinolysis, in which the side chain hydroxyl group of the serine supplies its oxygen atom to form the C-terminus of the beta chain, while the remainder of the serine residue undergoes an oxidative deamination to produce ammonia and the pyruvoyl group blocking the N-terminus of the alpha chain.

The catalysed reaction is S-adenosyl-L-methionine + H(+) = S-adenosyl 3-(methylsulfanyl)propylamine + CO2. Its pathway is amine and polyamine biosynthesis; S-adenosylmethioninamine biosynthesis; S-adenosylmethioninamine from S-adenosyl-L-methionine: step 1/1. In terms of biological role, catalyzes the decarboxylation of S-adenosylmethionine to S-adenosylmethioninamine (dcAdoMet), the propylamine donor required for the synthesis of the polyamines spermine and spermidine from the diamine putrescine. The protein is S-adenosylmethionine decarboxylase proenzyme of Pseudomonas paraeruginosa (strain DSM 24068 / PA7) (Pseudomonas aeruginosa (strain PA7)).